The sequence spans 262 residues: Flap endonuclease Xni (262 aa).

Asp-112 is a Mg(2+) binding site. Residues 171 to 258 form the 5'-3' exonuclease domain; it reads QQLNDYWAIT…GFNLKDLRYT (88 aa). Residues Ile-179, Val-190, and Ile-193 each coordinate K(+). The tract at residues 192 to 197 is interaction with DNA; the sequence is GIGSKG.

The protein belongs to the Xni family. Mg(2+) serves as cofactor. Requires K(+) as cofactor.

Functionally, has flap endonuclease activity. During DNA replication, flap endonucleases cleave the 5'-overhanging flap structure that is generated by displacement synthesis when DNA polymerase encounters the 5'-end of a downstream Okazaki fragment. This chain is Flap endonuclease Xni, found in Psychromonas ingrahamii (strain DSM 17664 / CCUG 51855 / 37).